The primary structure comprises 394 residues: Ornithine aminotransferase 1 (394 aa).

The residue at position 252 (Lys252) is an N6-(pyridoxal phosphate)lysine.

The protein belongs to the class-III pyridoxal-phosphate-dependent aminotransferase family. OAT subfamily. It depends on pyridoxal 5'-phosphate as a cofactor.

The protein resides in the cytoplasm. It catalyses the reaction a 2-oxocarboxylate + L-ornithine = L-glutamate 5-semialdehyde + an L-alpha-amino acid. It functions in the pathway amino-acid biosynthesis; L-proline biosynthesis; L-glutamate 5-semialdehyde from L-ornithine: step 1/1. Its function is as follows. Catalyzes the interconversion of ornithine to glutamate semialdehyde. The chain is Ornithine aminotransferase 1 from Staphylococcus aureus (strain COL).